Consider the following 177-residue polypeptide: Large ribosomal subunit protein uL6 (177 aa).

Belongs to the universal ribosomal protein uL6 family. In terms of assembly, part of the 50S ribosomal subunit.

Its function is as follows. This protein binds to the 23S rRNA, and is important in its secondary structure. It is located near the subunit interface in the base of the L7/L12 stalk, and near the tRNA binding site of the peptidyltransferase center. This is Large ribosomal subunit protein uL6 from Rickettsia africae (strain ESF-5).